A 342-amino-acid chain; its full sequence is Ribosomal RNA small subunit methyltransferase C (342 aa).

This sequence belongs to the methyltransferase superfamily. RsmC family. Monomer.

It is found in the cytoplasm. The enzyme catalyses guanosine(1207) in 16S rRNA + S-adenosyl-L-methionine = N(2)-methylguanosine(1207) in 16S rRNA + S-adenosyl-L-homocysteine + H(+). Its function is as follows. Specifically methylates the guanine in position 1207 of 16S rRNA in the 30S particle. The sequence is that of Ribosomal RNA small subunit methyltransferase C from Erwinia tasmaniensis (strain DSM 17950 / CFBP 7177 / CIP 109463 / NCPPB 4357 / Et1/99).